A 247-amino-acid chain; its full sequence is Diglucosylglycerate octanoyltransferase (247 aa).

Belongs to the OctT acyltransferase family. As to quaternary structure, homotetramer.

The enzyme catalyses (2R)-2-O-[alpha-D-glucopyranosyl-(1-&gt;6)-alpha-D-glucopyranosyl]-glycerate + octanoyl-CoA = (2R)-2-O-[6-O-octanoyl-alpha-D-glucopyranosyl-(1-&gt;6)-alpha-D-glucopyranosyl]-glycerate + CoA. In terms of biological role, sugar octanoyltransferase likely involved in the biosynthesis of mycobacterial methylglucose lipopolysaccharide (MGLP). Catalyzes the transfer of an octanoyl group from octanoyl-CoA to the C6 OH of the second glucose in diglucosylglycerate (DGG). DGG is the preferred acceptor, but to a lesser extent, GG (glucosylglycerate) can also be used as substrate. DGG and GG are the two earliest intermediates in MGLP biosynthesis. The chain is Diglucosylglycerate octanoyltransferase from Mycobacterium tuberculosis (strain ATCC 25618 / H37Rv).